The primary structure comprises 334 residues: Putative transport protein MTH_1211 (334 aa).

Transmembrane regions (helical) follow at residues 24 to 44 (AIVVYPLWTMLFLGAVFAYIV), 60 to 80 (VSIILAMIVVIMPLVGILVFT), 84 to 104 (IINSAPSLLSLAGSIHVPGAG), 131 to 151 (YVVAILQSVPMISLQLFVFLS), 189 to 209 (VLLSIFYGHFLTALAIGLMAA), 220 to 240 (AILLGIMTGLFQLIPVIGPWA), 255 to 275 (ILRGVLVLIFGLFLSTIDIYL), and 289 to 309 (MIFLVGFLGGPVVWGVAGFIV).

The protein belongs to the autoinducer-2 exporter (AI-2E) (TC 2.A.86) family.

Its subcellular location is the cell membrane. This Methanothermobacter thermautotrophicus (strain ATCC 29096 / DSM 1053 / JCM 10044 / NBRC 100330 / Delta H) (Methanobacterium thermoautotrophicum) protein is Putative transport protein MTH_1211.